Consider the following 201-residue polypeptide: Recombination protein RecR (201 aa).

Residues 60-75 (CSCCGNVDTIDPCTVC) form a C4-type zinc finger. Residues 83 to 178 (SVIIVVEDVA…KITRLAHGVP (96 aa)) form the Toprim domain.

The protein belongs to the RecR family.

May play a role in DNA repair. It seems to be involved in an RecBC-independent recombinational process of DNA repair. It may act with RecF and RecO. In Sinorhizobium fredii (strain NBRC 101917 / NGR234), this protein is Recombination protein RecR.